A 179-amino-acid chain; its full sequence is Ribosome maturation factor RimM (179 aa).

The region spanning 95 to 174 (KDEFFYFDIL…QIFCTQDAFL (80 aa)) is the PRC barrel domain.

It belongs to the RimM family. In terms of assembly, binds ribosomal protein uS19.

It localises to the cytoplasm. An accessory protein needed during the final step in the assembly of 30S ribosomal subunit, possibly for assembly of the head region. Essential for efficient processing of 16S rRNA. May be needed both before and after RbfA during the maturation of 16S rRNA. It has affinity for free ribosomal 30S subunits but not for 70S ribosomes. The chain is Ribosome maturation factor RimM from Campylobacter jejuni subsp. doylei (strain ATCC BAA-1458 / RM4099 / 269.97).